The primary structure comprises 95 residues: Large ribosomal subunit protein uL23 (95 aa).

The protein belongs to the universal ribosomal protein uL23 family. In terms of assembly, part of the 50S ribosomal subunit. Contacts protein L29 and trigger factor when it is bound to the ribosome.

In terms of biological role, one of the early assembly protein it binds 23S rRNA. One of the proteins that surrounds the polypeptide exit tunnel on the outside of the subunit. Forms the main docking site for trigger factor binding to the ribosome. The chain is Large ribosomal subunit protein uL23 from Deinococcus radiodurans (strain ATCC 13939 / DSM 20539 / JCM 16871 / CCUG 27074 / LMG 4051 / NBRC 15346 / NCIMB 9279 / VKM B-1422 / R1).